The primary structure comprises 363 residues: Carbamoyl phosphate synthase small chain (363 aa).

The CPSase stretch occupies residues 1-173 (MMKAFLVLDN…SKYIFGTHTG (173 aa)). L-glutamine-binding residues include S46, G225, and G227. The Glutamine amidotransferase type-1 domain occupies 177–363 (KLAVYDYGVK…YDLVEKTKKG (187 aa)). C253 functions as the Nucleophile in the catalytic mechanism. L-glutamine-binding residues include L254, Q257, N295, G297, and F298. Residues H336 and E338 contribute to the active site.

It belongs to the CarA family. As to quaternary structure, composed of two chains; the small (or glutamine) chain promotes the hydrolysis of glutamine to ammonia, which is used by the large (or ammonia) chain to synthesize carbamoyl phosphate. Tetramer of heterodimers (alpha,beta)4.

The enzyme catalyses hydrogencarbonate + L-glutamine + 2 ATP + H2O = carbamoyl phosphate + L-glutamate + 2 ADP + phosphate + 2 H(+). It catalyses the reaction L-glutamine + H2O = L-glutamate + NH4(+). It participates in amino-acid biosynthesis; L-arginine biosynthesis; carbamoyl phosphate from bicarbonate: step 1/1. The protein operates within pyrimidine metabolism; UMP biosynthesis via de novo pathway; (S)-dihydroorotate from bicarbonate: step 1/3. Its function is as follows. Small subunit of the glutamine-dependent carbamoyl phosphate synthetase (CPSase). CPSase catalyzes the formation of carbamoyl phosphate from the ammonia moiety of glutamine, carbonate, and phosphate donated by ATP, constituting the first step of 2 biosynthetic pathways, one leading to arginine and/or urea and the other to pyrimidine nucleotides. The small subunit (glutamine amidotransferase) binds and cleaves glutamine to supply the large subunit with the substrate ammonia. This chain is Carbamoyl phosphate synthase small chain, found in Leptospira interrogans serogroup Icterohaemorrhagiae serovar copenhageni (strain Fiocruz L1-130).